The primary structure comprises 391 residues: Elongation factor Tu 1 (391 aa).

The tr-type G domain maps to 10-201 (KLHVNIGTIG…EVDRYIPTPE (192 aa)). The segment at 19 to 26 (GHVDHGKT) is G1. A GTP-binding site is contributed by 19–26 (GHVDHGKT). Threonine 26 serves as a coordination point for Mg(2+). The interval 55–59 (GITIS) is G2. Residues 76-79 (DCPG) form a G3 region. GTP is bound by residues 76–80 (DCPGH) and 131–134 (NKVD). Residues 131–134 (NKVD) form a G4 region. A G5 region spans residues 169-171 (SAL).

It belongs to the TRAFAC class translation factor GTPase superfamily. Classic translation factor GTPase family. EF-Tu/EF-1A subfamily. In terms of assembly, monomer.

It is found in the cytoplasm. It catalyses the reaction GTP + H2O = GDP + phosphate + H(+). GTP hydrolase that promotes the GTP-dependent binding of aminoacyl-tRNA to the A-site of ribosomes during protein biosynthesis. This Bartonella bacilliformis (strain ATCC 35685 / KC583 / Herrer 020/F12,63) protein is Elongation factor Tu 1.